Reading from the N-terminus, the 366-residue chain is Aminomethyltransferase (366 aa).

Belongs to the GcvT family. In terms of assembly, the glycine cleavage system is composed of four proteins: P, T, L and H.

The catalysed reaction is N(6)-[(R)-S(8)-aminomethyldihydrolipoyl]-L-lysyl-[protein] + (6S)-5,6,7,8-tetrahydrofolate = N(6)-[(R)-dihydrolipoyl]-L-lysyl-[protein] + (6R)-5,10-methylene-5,6,7,8-tetrahydrofolate + NH4(+). The glycine cleavage system catalyzes the degradation of glycine. The polypeptide is Aminomethyltransferase (Bordetella petrii (strain ATCC BAA-461 / DSM 12804 / CCUG 43448)).